The chain runs to 228 residues: DNA repair and recombination protein RadB (228 aa).

This sequence belongs to the eukaryotic RecA-like protein family. RadB subfamily.

Its function is as follows. Involved in DNA repair and in homologous recombination. May regulate the cleavage reactions of the branch-structured DNA. Has a very weak ATPase activity that is not stimulated by DNA. Binds DNA but does not promote DNA strands exchange. This Thermococcus sibiricus (strain DSM 12597 / MM 739) protein is DNA repair and recombination protein RadB.